The following is a 295-amino-acid chain: GTPase Era (295 aa).

One can recognise an Era-type G domain in the interval 7 to 176 (KTVSVCIIGR…ITSKAKIAPW (170 aa)). The tract at residues 15 to 22 (GRPNSGKS) is G1. 15–22 (GRPNSGKS) provides a ligand contact to GTP. Residues 41-45 (QTTRS) form a G2 region. Residues 62–65 (DTPG) form a G3 region. GTP contacts are provided by residues 62–66 (DTPGI) and 124–127 (NKID). The G4 stretch occupies residues 124–127 (NKID). Residues 152–154 (ISA) are G5. Residues 204–281 (LQQELPYKLT…HLFLFVKVRE (78 aa)) enclose the KH type-2 domain.

It belongs to the TRAFAC class TrmE-Era-EngA-EngB-Septin-like GTPase superfamily. Era GTPase family. In terms of assembly, monomer.

The protein localises to the cytoplasm. The protein resides in the cell inner membrane. Functionally, an essential GTPase that binds both GDP and GTP, with rapid nucleotide exchange. Plays a role in 16S rRNA processing and 30S ribosomal subunit biogenesis and possibly also in cell cycle regulation and energy metabolism. This is GTPase Era from Rickettsia bellii (strain OSU 85-389).